Consider the following 181-residue polypeptide: Probable inosine/xanthosine triphosphatase (181 aa).

Asp-65 provides a ligand contact to Mg(2+).

This sequence belongs to the YjjX NTPase family. In terms of assembly, homodimer. Mg(2+) serves as cofactor. The cofactor is Mn(2+).

It carries out the reaction XTP + H2O = XDP + phosphate + H(+). It catalyses the reaction ITP + H2O = IDP + phosphate + H(+). Functionally, phosphatase that hydrolyzes non-canonical purine nucleotides such as XTP and ITP to their respective diphosphate derivatives. Probably excludes non-canonical purines from DNA/RNA precursor pool, thus preventing their incorporation into DNA/RNA and avoiding chromosomal lesions. The polypeptide is Probable inosine/xanthosine triphosphatase (Caldivirga maquilingensis (strain ATCC 700844 / DSM 13496 / JCM 10307 / IC-167)).